Consider the following 231-residue polypeptide: uncharacterized protein (231 aa).

5 helical membrane passes run S36–I56, S58–W78, A83–P103, F143–L163, and S170–Y190.

This sequence belongs to the BI1 family.

Its subcellular location is the cell membrane. This is an uncharacterized protein from Campylobacter jejuni subsp. jejuni serotype O:2 (strain ATCC 700819 / NCTC 11168).